Reading from the N-terminus, the 690-residue chain is Eukaryotic translation initiation factor 3 subunit B (690 aa).

Basic and acidic residues predominate over residues 1-11 (MAKKKSEEHSG). A disordered region spans residues 1 to 36 (MAKKKSEEHSGADANDSDYTEEPNFDDPPNFVDNIS). Over residues 15 to 25 (NDSDYTEEPNF) the composition is skewed to acidic residues. One can recognise an RRM domain in the interval 57–141 (SVVVVDNMPK…YTFAVNLFTD (85 aa)). WD repeat units lie at residues 207-246 (TRER…KIQK), 292-331 (GDGM…LLDL), 334-369 (IKIP…TLME), 442-484 (EIRE…KPSL), and 530-575 (PDHF…IRRT). A coiled-coil region spans residues 614 to 645 (QKDRLRLTRASKELLEKRSQLRETFMEYRNKR).

It belongs to the eIF-3 subunit B family. As to quaternary structure, component of the eukaryotic translation initiation factor 3 (eIF-3) complex. The eIF-3 complex interacts with pix. Interacts with mxt.

Its subcellular location is the cytoplasm. In terms of biological role, RNA-binding component of the eukaryotic translation initiation factor 3 (eIF-3) complex, which is involved in protein synthesis of a specialized repertoire of mRNAs and, together with other initiation factors, stimulates binding of mRNA and methionyl-tRNAi to the 40S ribosome. The eIF-3 complex specifically targets and initiates translation of a subset of mRNAs involved in cell proliferation. The sequence is that of Eukaryotic translation initiation factor 3 subunit B from Drosophila virilis (Fruit fly).